The sequence spans 342 residues: Cell division protein ZipA (342 aa).

The Periplasmic segment spans residues Met-1 to Leu-6. Residues Val-7 to Ile-27 form a helical membrane-spanning segment. Topologically, residues Arg-28–Ala-342 are cytoplasmic. Positions Lys-33–Val-57 are disordered. The segment covering Gln-47 to Val-57 has biased composition (basic and acidic residues).

Belongs to the ZipA family. In terms of assembly, interacts with FtsZ via their C-terminal domains.

The protein resides in the cell inner membrane. In terms of biological role, essential cell division protein that stabilizes the FtsZ protofilaments by cross-linking them and that serves as a cytoplasmic membrane anchor for the Z ring. Also required for the recruitment to the septal ring of downstream cell division proteins. This is Cell division protein ZipA from Shewanella putrefaciens (strain CN-32 / ATCC BAA-453).